We begin with the raw amino-acid sequence, 93 residues long: Large ribosomal subunit protein uL23 (93 aa).

It belongs to the universal ribosomal protein uL23 family. As to quaternary structure, part of the 50S ribosomal subunit. Contacts protein L29, and trigger factor when it is bound to the ribosome.

One of the early assembly proteins it binds 23S rRNA. One of the proteins that surrounds the polypeptide exit tunnel on the outside of the ribosome. Forms the main docking site for trigger factor binding to the ribosome. The sequence is that of Large ribosomal subunit protein uL23 from Campylobacter fetus subsp. fetus (strain 82-40).